We begin with the raw amino-acid sequence, 365 residues long: Ribosomal RNA large subunit methyltransferase M (365 aa).

S-adenosyl-L-methionine-binding positions include Ser-193, 226-229 (CPGG), Asp-245, Asp-265, and Asp-282. Lys-311 functions as the Proton acceptor in the catalytic mechanism.

It belongs to the class I-like SAM-binding methyltransferase superfamily. RNA methyltransferase RlmE family. RlmM subfamily. In terms of assembly, monomer.

It is found in the cytoplasm. The enzyme catalyses cytidine(2498) in 23S rRNA + S-adenosyl-L-methionine = 2'-O-methylcytidine(2498) in 23S rRNA + S-adenosyl-L-homocysteine + H(+). Its function is as follows. Catalyzes the 2'-O-methylation at nucleotide C2498 in 23S rRNA. The sequence is that of Ribosomal RNA large subunit methyltransferase M from Alteromonas mediterranea (strain DSM 17117 / CIP 110805 / LMG 28347 / Deep ecotype).